The sequence spans 410 residues: Shaggy-related protein kinase epsilon (410 aa).

An N-acetylalanine modification is found at alanine 2. One can recognise a Protein kinase domain in the interval 74–358 (YMAERIVGQG…AMEAIVHPFF (285 aa)). ATP contacts are provided by residues 80–88 (VGQGSFGIV) and lysine 103. Aspartate 199 acts as the Proton acceptor in catalysis. Tyrosine 234 bears the Phosphotyrosine mark.

Belongs to the protein kinase superfamily. CMGC Ser/Thr protein kinase family. GSK-3 subfamily. In terms of assembly, binds to KIB1. Post-translationally, autophosphorylated mainly on threonine and serine residues.

The catalysed reaction is L-seryl-[protein] + ATP = O-phospho-L-seryl-[protein] + ADP + H(+). It carries out the reaction L-threonyl-[protein] + ATP = O-phospho-L-threonyl-[protein] + ADP + H(+). In terms of biological role, may mediate extracellular signals to regulate transcription in differentiating cells. The polypeptide is Shaggy-related protein kinase epsilon (ASK5) (Arabidopsis thaliana (Mouse-ear cress)).